Reading from the N-terminus, the 193-residue chain is Ubiquitin-conjugating enzyme E2 E1 (193 aa).

Residues 1–45 are disordered; sequence MSDDDSRASTSSSSSSSSNQQTEKEGSTPKKKESKVSMSKNSKLL. Residue serine 2 is modified to N-acetylserine. Low complexity predominate over residues 8–18; the sequence is ASTSSSSSSSS. Over residues 22–35 the composition is skewed to basic and acidic residues; sequence TEKEGSTPKKKESK. The segment covering 36–45 has biased composition (polar residues); sequence VSMSKNSKLL. Residues 47–193 enclose the UBC core domain; sequence TSAKRIQKEL…ARQWTKRYAT (147 aa). Catalysis depends on cysteine 131, which acts as the Glycyl thioester intermediate. A Glycyl lysine isopeptide (Lys-Gly) (interchain with G-Cter in ISG15) cross-link involves residue lysine 136.

It belongs to the ubiquitin-conjugating enzyme family. As to quaternary structure, interacts with RNF14. In terms of processing, ISGylation suppresses ubiquitin E2 enzyme activity. Post-translationally, autoubiquitinated.

Its subcellular location is the nucleus. It catalyses the reaction S-ubiquitinyl-[E1 ubiquitin-activating enzyme]-L-cysteine + [E2 ubiquitin-conjugating enzyme]-L-cysteine = [E1 ubiquitin-activating enzyme]-L-cysteine + S-ubiquitinyl-[E2 ubiquitin-conjugating enzyme]-L-cysteine.. It carries out the reaction S-ubiquitinyl-[E1 ubiquitin-activating enzyme]-L-cysteine + [acceptor protein]-L-lysine = [E1 ubiquitin-activating enzyme]-L-cysteine + N(6)-monoubiquitinyl-[acceptor protein]-L-lysine.. The protein operates within protein modification; protein ubiquitination. In terms of biological role, accepts ubiquitin from the E1 complex and catalyzes its covalent attachment to other proteins. Catalyzes the covalent attachment of ISG15 to other proteins. Mediates the selective degradation of short-lived and abnormal proteins. In vitro also catalyzes 'Lys-48'-linked polyubiquitination. This chain is Ubiquitin-conjugating enzyme E2 E1 (Ube2e1), found in Mus musculus (Mouse).